The chain runs to 432 residues: Adenylosuccinate synthetase (432 aa).

Residues 13 to 19 (GDEGKGK) and 41 to 43 (GHT) contribute to the GTP site. Catalysis depends on Asp-14, which acts as the Proton acceptor. Positions 14 and 41 each coordinate Mg(2+). IMP contacts are provided by residues 14–17 (DEGK), 39–42 (NAGH), Thr-130, Arg-144, Gln-225, Thr-240, and Arg-304. His-42 acts as the Proton donor in catalysis. Residue 300–306 (ATTGRKR) participates in substrate binding. GTP contacts are provided by residues Arg-306, 332-334 (KLD), and 415-417 (STG).

It belongs to the adenylosuccinate synthetase family. Homodimer. It depends on Mg(2+) as a cofactor.

Its subcellular location is the cytoplasm. It catalyses the reaction IMP + L-aspartate + GTP = N(6)-(1,2-dicarboxyethyl)-AMP + GDP + phosphate + 2 H(+). Its pathway is purine metabolism; AMP biosynthesis via de novo pathway; AMP from IMP: step 1/2. Plays an important role in the de novo pathway of purine nucleotide biosynthesis. Catalyzes the first committed step in the biosynthesis of AMP from IMP. The polypeptide is Adenylosuccinate synthetase (Pseudoalteromonas atlantica (strain T6c / ATCC BAA-1087)).